The sequence spans 409 residues: DNA double-strand break repair protein Mre11 (409 aa).

Residues D9, H11, D50, and E85 each contribute to the Mn(2+) site. H86 acts as the Proton donor in catalysis. Residues H170, H199, and H201 each contribute to the Mn(2+) site.

This sequence belongs to the MRE11/RAD32 family. In terms of assembly, homodimer. Forms a heterotetramer composed of two Mre11 subunits and two Rad50 subunits. It depends on Mn(2+) as a cofactor.

With respect to regulation, nuclease activity is regulated by Rad50. In terms of biological role, part of the Rad50/Mre11 complex, which is involved in the early steps of DNA double-strand break (DSB) repair. The complex may facilitate opening of the processed DNA ends to aid in the recruitment of HerA and NurA. Mre11 binds to DSB ends and has both double-stranded 3'-5' exonuclease activity and single-stranded endonuclease activity. The chain is DNA double-strand break repair protein Mre11 from Aeropyrum pernix (strain ATCC 700893 / DSM 11879 / JCM 9820 / NBRC 100138 / K1).